Reading from the N-terminus, the 435-residue chain is Virulence factor PIT1 (435 aa).

Helical transmembrane passes span 33 to 53, 77 to 97, 111 to 131, 143 to 163, and 204 to 224; these read ETTT…SEVI, IFFI…ILVT, WAWT…CVIG, VASW…MWTN, and TFWF…ACCI. A glycan (N-linked (GlcNAc...) asparagine) is linked at Asn-330. Over residues 392-404 the composition is skewed to polar residues; it reads SPQMPSKAQSQSI. The segment at 392 to 435 is disordered; sequence SPQMPSKAQSQSIPYKREVEVTVDMSPVPPPPGPSPAPLPAPYM. Positions 418-435 are enriched in pro residues; that stretch reads PVPPPPGPSPAPLPAPYM.

In terms of processing, O-mannosylated by PMT4. Is also N-glycosylated.

It is found in the cell membrane. In terms of biological role, plasma membrane virulence factor required for spreading and inducing tumors in infected leaves. The protein is Virulence factor PIT1 of Mycosarcoma maydis (Corn smut fungus).